The chain runs to 322 residues: Eukaryotic translation initiation factor 3 subunit I (322 aa).

WD repeat units lie at residues 4–43 (GHER…RLGT), 46–85 (GHQG…VIAS), 141–180 (MVES…KVVD), 184–223 (DHTA…CLKT), and 281–322 (GHFG…NIFE).

It belongs to the eIF-3 subunit I family. In terms of assembly, component of the eukaryotic translation initiation factor 3 (eIF-3) complex. The eIF-3 complex interacts with pix.

It is found in the cytoplasm. In terms of biological role, component of the eukaryotic translation initiation factor 3 (eIF-3) complex, which is involved in protein synthesis of a specialized repertoire of mRNAs and, together with other initiation factors, stimulates binding of mRNA and methionyl-tRNAi to the 40S ribosome. The eIF-3 complex specifically targets and initiates translation of a subset of mRNAs involved in cell proliferation. This Drosophila mojavensis (Fruit fly) protein is Eukaryotic translation initiation factor 3 subunit I.